The sequence spans 444 residues: N-succinylarginine dihydrolase (444 aa).

Residues 19-28 (AGLSFGNVAS), asparagine 110, and 137-138 (HR) each bind substrate. The active site involves glutamate 174. Arginine 214 provides a ligand contact to substrate. Histidine 250 is a catalytic residue. Aspartate 252 and asparagine 362 together coordinate substrate. The Nucleophile role is filled by cysteine 368.

It belongs to the succinylarginine dihydrolase family. Homodimer.

It carries out the reaction N(2)-succinyl-L-arginine + 2 H2O + 2 H(+) = N(2)-succinyl-L-ornithine + 2 NH4(+) + CO2. It functions in the pathway amino-acid degradation; L-arginine degradation via AST pathway; L-glutamate and succinate from L-arginine: step 2/5. Catalyzes the hydrolysis of N(2)-succinylarginine into N(2)-succinylornithine, ammonia and CO(2). This Shewanella sp. (strain ANA-3) protein is N-succinylarginine dihydrolase.